A 578-amino-acid chain; its full sequence is Proline--tRNA ligase (578 aa).

This sequence belongs to the class-II aminoacyl-tRNA synthetase family. ProS type 1 subfamily. In terms of assembly, homodimer.

It localises to the cytoplasm. The catalysed reaction is tRNA(Pro) + L-proline + ATP = L-prolyl-tRNA(Pro) + AMP + diphosphate. Its function is as follows. Catalyzes the attachment of proline to tRNA(Pro) in a two-step reaction: proline is first activated by ATP to form Pro-AMP and then transferred to the acceptor end of tRNA(Pro). As ProRS can inadvertently accommodate and process non-cognate amino acids such as alanine and cysteine, to avoid such errors it has two additional distinct editing activities against alanine. One activity is designated as 'pretransfer' editing and involves the tRNA(Pro)-independent hydrolysis of activated Ala-AMP. The other activity is designated 'posttransfer' editing and involves deacylation of mischarged Ala-tRNA(Pro). The misacylated Cys-tRNA(Pro) is not edited by ProRS. The protein is Proline--tRNA ligase of Burkholderia multivorans (strain ATCC 17616 / 249).